An 87-amino-acid chain; its full sequence is Phosphoribosyl-ATP pyrophosphatase (87 aa).

It belongs to the PRA-PH family.

The protein localises to the cytoplasm. The enzyme catalyses 1-(5-phospho-beta-D-ribosyl)-ATP + H2O = 1-(5-phospho-beta-D-ribosyl)-5'-AMP + diphosphate + H(+). Its pathway is amino-acid biosynthesis; L-histidine biosynthesis; L-histidine from 5-phospho-alpha-D-ribose 1-diphosphate: step 2/9. In Nocardia farcinica (strain IFM 10152), this protein is Phosphoribosyl-ATP pyrophosphatase.